We begin with the raw amino-acid sequence, 60 residues long: Light-harvesting protein B-800/850 alpha chain (60 aa).

At 1–14 (MNNAKIWTVVKPST) the chain is on the cytoplasmic side. A helical transmembrane segment spans residues 15-35 (GIPLILGAVAVAALIVHAGLL). H31 is a binding site for a bacteriochlorophyll. Over 36–60 (TNTTWFANYWNGNPMATVVAVAPAQ) the chain is Periplasmic.

Belongs to the antenna complex alpha subunit family. As to quaternary structure, the core complex is formed by different alpha and beta chains, binding bacteriochlorophyll molecules, and arranged most probably in tetrameric structures disposed around the reaction center. The non-pigmented gamma chains may constitute additional components.

It localises to the cell inner membrane. Functionally, antenna complexes are light-harvesting systems, which transfer the excitation energy to the reaction centers. The sequence is that of Light-harvesting protein B-800/850 alpha chain (pucA) from Rhodobacter capsulatus (Rhodopseudomonas capsulata).